We begin with the raw amino-acid sequence, 261 residues long: Acyl-[acyl-carrier-protein]--UDP-N-acetylglucosamine O-acyltransferase (261 aa).

This sequence belongs to the transferase hexapeptide repeat family. LpxA subfamily. Homotrimer.

The protein localises to the cytoplasm. It catalyses the reaction a (3R)-hydroxyacyl-[ACP] + UDP-N-acetyl-alpha-D-glucosamine = a UDP-3-O-[(3R)-3-hydroxyacyl]-N-acetyl-alpha-D-glucosamine + holo-[ACP]. Its pathway is glycolipid biosynthesis; lipid IV(A) biosynthesis; lipid IV(A) from (3R)-3-hydroxytetradecanoyl-[acyl-carrier-protein] and UDP-N-acetyl-alpha-D-glucosamine: step 1/6. Involved in the biosynthesis of lipid A, a phosphorylated glycolipid that anchors the lipopolysaccharide to the outer membrane of the cell. The protein is Acyl-[acyl-carrier-protein]--UDP-N-acetylglucosamine O-acyltransferase of Paracoccus denitrificans (strain Pd 1222).